Here is a 70-residue protein sequence, read N- to C-terminus: ATP synthase subunit epsilon, mitochondrial (70 aa).

This sequence belongs to the eukaryotic ATPase epsilon family. In terms of assembly, F-type ATPases have 2 components, CF(1) - the catalytic core - and CF(0) - the membrane proton channel. CF(1) has five subunits: alpha(3), beta(3), gamma(1), delta(1), epsilon(1). CF(0) has three main subunits: a, b and c.

The protein resides in the mitochondrion. The protein localises to the mitochondrion inner membrane. Its function is as follows. Mitochondrial membrane ATP synthase (F(1)F(0) ATP synthase or Complex V) produces ATP from ADP in the presence of a proton gradient across the membrane which is generated by electron transport complexes of the respiratory chain. F-type ATPases consist of two structural domains, F(1) - containing the extramembraneous catalytic core, and F(0) - containing the membrane proton channel, linked together by a central stalk and a peripheral stalk. During catalysis, ATP synthesis in the catalytic domain of F(1) is coupled via a rotary mechanism of the central stalk subunits to proton translocation. Part of the complex F(1) domain and of the central stalk which is part of the complex rotary element. Rotation of the central stalk against the surrounding alpha(3)beta(3) subunits leads to hydrolysis of ATP in three separate catalytic sites on the beta subunits. This is ATP synthase subunit epsilon, mitochondrial from Ipomoea batatas (Sweet potato).